The chain runs to 224 residues: 7-cyano-7-deazaguanine synthase (224 aa).

ATP is bound at residue 10–20 (LSGGLDSATVV). Zn(2+) is bound by residues Cys189, Cys199, Cys202, and Cys205.

This sequence belongs to the QueC family. Zn(2+) serves as cofactor.

It catalyses the reaction 7-carboxy-7-deazaguanine + NH4(+) + ATP = 7-cyano-7-deazaguanine + ADP + phosphate + H2O + H(+). It participates in purine metabolism; 7-cyano-7-deazaguanine biosynthesis. Its function is as follows. Catalyzes the ATP-dependent conversion of 7-carboxy-7-deazaguanine (CDG) to 7-cyano-7-deazaguanine (preQ(0)). In Stutzerimonas stutzeri (strain A1501) (Pseudomonas stutzeri), this protein is 7-cyano-7-deazaguanine synthase.